The primary structure comprises 509 residues: tRNA-2-methylthio-N(6)-dimethylallyladenosine synthase (509 aa).

A compositionally biased stretch (polar residues) spans 1-15; sequence MNEQQRLASQQANAS. The tract at residues 1 to 22 is disordered; the sequence is MNEQQRLASQQANASTKKEEKD. The 119-residue stretch at 66–184 folds into the MTTase N-terminal domain; the sequence is RKFYIRTYGC…LPYILKDAMF (119 aa). [4Fe-4S] cluster-binding residues include C75, C111, C145, C221, C225, and C228. The Radical SAM core domain maps to 207-437; it reads RRGDIKAWVN…NELVNEFSAK (231 aa). The 64-residue stretch at 440-503 folds into the TRAM domain; it reads KKYEGQIVEV…TWSLNGELVE (64 aa).

Belongs to the methylthiotransferase family. MiaB subfamily. Monomer. It depends on [4Fe-4S] cluster as a cofactor.

Its subcellular location is the cytoplasm. It carries out the reaction N(6)-dimethylallyladenosine(37) in tRNA + (sulfur carrier)-SH + AH2 + 2 S-adenosyl-L-methionine = 2-methylsulfanyl-N(6)-dimethylallyladenosine(37) in tRNA + (sulfur carrier)-H + 5'-deoxyadenosine + L-methionine + A + S-adenosyl-L-homocysteine + 2 H(+). Functionally, catalyzes the methylthiolation of N6-(dimethylallyl)adenosine (i(6)A), leading to the formation of 2-methylthio-N6-(dimethylallyl)adenosine (ms(2)i(6)A) at position 37 in tRNAs that read codons beginning with uridine. The polypeptide is tRNA-2-methylthio-N(6)-dimethylallyladenosine synthase (Bacillus cytotoxicus (strain DSM 22905 / CIP 110041 / 391-98 / NVH 391-98)).